The chain runs to 78 residues: Large ribosomal subunit protein bL28 (78 aa).

This sequence belongs to the bacterial ribosomal protein bL28 family.

The sequence is that of Large ribosomal subunit protein bL28 from Francisella tularensis subsp. holarctica (strain FTNF002-00 / FTA).